We begin with the raw amino-acid sequence, 466 residues long: ATP synthase subunit beta (466 aa).

An ATP-binding site is contributed by 152–159 (GGAGVGKT).

The protein belongs to the ATPase alpha/beta chains family. F-type ATPases have 2 components, CF(1) - the catalytic core - and CF(0) - the membrane proton channel. CF(1) has five subunits: alpha(3), beta(3), gamma(1), delta(1), epsilon(1). CF(0) has three main subunits: a(1), b(2) and c(9-12). The alpha and beta chains form an alternating ring which encloses part of the gamma chain. CF(1) is attached to CF(0) by a central stalk formed by the gamma and epsilon chains, while a peripheral stalk is formed by the delta and b chains.

The protein localises to the cell inner membrane. The enzyme catalyses ATP + H2O + 4 H(+)(in) = ADP + phosphate + 5 H(+)(out). Produces ATP from ADP in the presence of a proton gradient across the membrane. The catalytic sites are hosted primarily by the beta subunits. In Helicobacter pylori (strain HPAG1), this protein is ATP synthase subunit beta.